The following is a 289-amino-acid chain: F-box protein PP2-B15 (289 aa).

Residues Met1 to Phe43 form the F-box domain.

The chain is F-box protein PP2-B15 (PP2B15) from Arabidopsis thaliana (Mouse-ear cress).